The primary structure comprises 153 residues: ORM1-like protein 1 (153 aa).

Residues 1–26 (MNVGVAHSEVNPNTRVMNSRGMWLTY) are Cytoplasmic-facing. 2 consecutive transmembrane segments (helical) span residues 27–46 (ALGVGLLHIVLLSIPFFSVP) and 47–64 (VAWTLTNVIHNLGMYVFL). The Cytoplasmic portion of the chain corresponds to 65-100 (HAVKGTPFETPDQGKARLLTHWEQLDYGVQFTSSRK). The chain crosses the membrane as a helical span at residues 101–121 (FFTISPIILYFLASFYTKYDT). The Extracellular segment spans residues 122–123 (TH). A helical transmembrane segment spans residues 124–140 (FILNTASLLSVLIPKMP). The Cytoplasmic segment spans residues 141–153 (QLHGVRIFGINKY).

It belongs to the ORM family. In terms of assembly, ceramide-sensitive subunit of the serine palmitoyltransferase (SPT) complex, which is also composed of SPTLC1, SPTLC2/3 and SPTSSA/B.

The protein resides in the endoplasmic reticulum membrane. Its function is as follows. Plays an essential role in the homeostatic regulation of sphingolipid de novo biosynthesis by modulating the activity of the serine palmitoyltransferase (SPT) in response to ceramide levels. When complexed to SPT, the binding of ceramides to its N-terminus stabilizes a conformation that block SPT substrate entry, hence preventing SPT catalytic activity. Through this mechanism, maintains ceramide levels at sufficient concentrations for the production of complex sphingolipids, but which prevents the accumulation of ceramides to levels that trigger apoptosis. The polypeptide is ORM1-like protein 1 (ORMDL1) (Bos taurus (Bovine)).